We begin with the raw amino-acid sequence, 491 residues long: Glutamate--tRNA ligase (491 aa).

Residues 14–24 carry the 'HIGH' region motif; it reads PSPTGSPHVGL. Cysteine 111, cysteine 113, cysteine 136, and aspartate 138 together coordinate Zn(2+). The short motif at 257-261 is the 'KMSKS' region element; it reads KLSKR. Lysine 260 is an ATP binding site.

This sequence belongs to the class-I aminoacyl-tRNA synthetase family. Glutamate--tRNA ligase type 1 subfamily. In terms of assembly, monomer. Requires Zn(2+) as cofactor.

The protein localises to the cytoplasm. The catalysed reaction is tRNA(Glu) + L-glutamate + ATP = L-glutamyl-tRNA(Glu) + AMP + diphosphate. Its function is as follows. Catalyzes the attachment of glutamate to tRNA(Glu) in a two-step reaction: glutamate is first activated by ATP to form Glu-AMP and then transferred to the acceptor end of tRNA(Glu). This chain is Glutamate--tRNA ligase, found in Nocardioides sp. (strain ATCC BAA-499 / JS614).